The primary structure comprises 198 residues: Probable thymidylate kinase (198 aa).

ATP is bound at residue 7–14; it reads GIDGAGKS.

This sequence belongs to the thymidylate kinase family.

It carries out the reaction dTMP + ATP = dTDP + ADP. The protein is Probable thymidylate kinase of Methanocorpusculum labreanum (strain ATCC 43576 / DSM 4855 / Z).